The following is a 467-amino-acid chain: Glutamate--tRNA ligase (467 aa).

Residues 9–19 (PSPTGFLHIGG) carry the 'HIGH' region motif. The 'KMSKS' region motif lies at 250–254 (KLSKR). Position 253 (Lys253) interacts with ATP.

This sequence belongs to the class-I aminoacyl-tRNA synthetase family. Glutamate--tRNA ligase type 1 subfamily. As to quaternary structure, monomer.

It localises to the cytoplasm. The enzyme catalyses tRNA(Glu) + L-glutamate + ATP = L-glutamyl-tRNA(Glu) + AMP + diphosphate. In terms of biological role, catalyzes the attachment of glutamate to tRNA(Glu) in a two-step reaction: glutamate is first activated by ATP to form Glu-AMP and then transferred to the acceptor end of tRNA(Glu). This is Glutamate--tRNA ligase from Mesomycoplasma hyopneumoniae (strain 7448) (Mycoplasma hyopneumoniae).